Here is a 358-residue protein sequence, read N- to C-terminus: Septin-12 (358 aa).

The interval 1–25 is disordered; it reads MDPLRRSPSPCLSSQPSSPSTPPCE. A compositionally biased stretch (low complexity) spans 6-18; sequence RSPSPCLSSQPSS. The Septin-type G domain maps to 46–317; the sequence is MGFEFNIMVV…ENYRVIRLNE (272 aa). The tract at residues 46-319 is interaction with SEPTIN7; that stretch reads MGFEFNIMVV…YRVIRLNESH (274 aa). Positions 56–63 are G1 motif; sequence GQSGLGKS. Residues 56–63, Thr-89, Gly-115, 195–203, Gly-251, and Arg-266 each bind GTP; these read GQSGLGKS and RADSLTMEE. The segment at 112-115 is G3 motif; it reads DTPG. The G4 motif stretch occupies residues 194–197; it reads ARAD. A self-association (via N-terminus) to polymerize octameric septin 12-7-6-2/4-2/4-6-7-12 filaments region spans residues 258–358; sequence VNGRCVLGRK…GAHDDSDDEF (101 aa).

Belongs to the TRAFAC class TrmE-Era-EngA-EngB-Septin-like GTPase superfamily. Septin GTPase family. As to quaternary structure, septins polymerize into heterooligomeric protein complexes that form filaments, and can associate with cellular membranes, actin filaments and microtubules. GTPase activity is required for filament formation. Interacts with SEPTIN6 and SEPTIN11. Self-associates. Component of a septin core octameric complex consisting of SEPTIN12, SEPTIN7, SEPTIN6 and SEPTIN2 or SEPTIN4 in the order 12-7-6-2-2-6-7-12 or 12-7-6-4-4-6-7-12 and located in the sperm annulus; the octamer polymerizes into filaments via the SEPTIN12 N- and C-termini; the SEPTIN12:SEPTIN7 association is mediated by the respective GTP-binding domains. Interacts with SPAG4 and LMNB1. Associates with alpha- and beta-tubulins. Widely expressed. Expressed in lymph node.

The protein resides in the cytoplasm. Its subcellular location is the cytoskeleton. It localises to the spindle. The protein localises to the nucleus. It is found in the cell projection. The protein resides in the cilium. Its subcellular location is the flagellum. Its function is as follows. Filament-forming cytoskeletal GTPase. Involved in spermatogenesis. Involved in the morphogenesis of sperm heads and the elongation of sperm tails probably implicating the association with alpha- and beta-tubulins. Forms a filamentous structure with SEPTIN7, SEPTIN6, SEPTIN2 and probably SEPTIN4 at the sperm annulus which is required for the structural integrity and motility of the sperm tail during postmeiotic differentiation. May play a role in cytokinesis (Potential). This chain is Septin-12, found in Homo sapiens (Human).